A 221-amino-acid polypeptide reads, in one-letter code: Josephin-like protein (221 aa).

Positions Met-1 to His-37 are disordered. Positions Leu-9 to Gly-20 are enriched in low complexity. The Josephin domain occupies Pro-36–Trp-214. Cys-49 (nucleophile) is an active-site residue. Catalysis depends on His-152, which acts as the Proton acceptor.

The catalysed reaction is Thiol-dependent hydrolysis of ester, thioester, amide, peptide and isopeptide bonds formed by the C-terminal Gly of ubiquitin (a 76-residue protein attached to proteins as an intracellular targeting signal).. May act as a deubiquitinating enzyme. The protein is Josephin-like protein of Drosophila melanogaster (Fruit fly).